Reading from the N-terminus, the 195-residue chain is Thymidine kinase (195 aa).

Residues 15–22 (GPMYSGKS), Glu-23, 57–58 (SH), and 88–91 (DEVQ) each bind ATP. Catalysis depends on Glu-89, which acts as the Proton acceptor. Phe-120 is a substrate binding site. Residues Cys-145 and Cys-148 each contribute to the Zn(2+) site. Tyr-179 contacts substrate. Residues Cys-183 and Cys-186 each coordinate Zn(2+).

This sequence belongs to the thymidine kinase family.

The protein resides in the cytoplasm. The enzyme catalyses thymidine + ATP = dTMP + ADP + H(+). This is Thymidine kinase from Clostridium acetobutylicum (strain ATCC 824 / DSM 792 / JCM 1419 / IAM 19013 / LMG 5710 / NBRC 13948 / NRRL B-527 / VKM B-1787 / 2291 / W).